Consider the following 88-residue polypeptide: uncharacterized protein (88 aa).

Positions 1-22 (MLKASILFITISLTLMLENSYG) are cleaved as a signal peptide. Intrachain disulfides connect Cys59–Cys73, Cys66–Cys77, and Cys72–Cys82.

Its subcellular location is the secreted. This is an uncharacterized protein from Schistosoma japonicum (Blood fluke).